The sequence spans 338 residues: MLSALARPVGAALRRSFSTSAQNNAKVAVLGASGGIGQPLSLLLKNSPLVSRLTLYDIAHTPGVAADLSHIETRANVKGYLGPEQLPDCLKGCDVVVIPAGVPRKPGMTRDDLFNTNATIVATLTAACAQHCPEAMICIISNPVNSTIPITAEVFKKHGVYNPNKIFGVTTLDIVRANTFVAELKGLDPARVNVPVIGGHAGKTIIPLISQCTPKVDFPQDQLATLTGRIQEAGTEVVKAKAGAGSATLSMAYAGARFVFSLVDAMNGKEGVIECSFVQSKETECTYFSTPLLLGKKGLEKNLGIGKITPFEEKMIAEAIPELKASIKKGEDFVKNMK.

The N-terminal 24 residues, 1–24 (MLSALARPVGAALRRSFSTSAQNN), are a transit peptide targeting the mitochondrion. NAD(+)-binding positions include 31 to 37 (GASGGIG) and D57. A glycan (O-linked (GlcNAc) serine) is linked at S33. 2 positions are modified to N6-acetyllysine; alternate: K78 and K91. K78 and K91 each carry N6-succinyllysine; alternate. Residues R104 and R110 each coordinate substrate. Residues N117 and 140 to 142 (ISN) each bind NAD(+). Substrate is bound at residue N142. K165 is modified (N6-acetyllysine). R176 is a binding site for substrate. K185 carries the post-translational modification N6-acetyllysine; alternate. An N6-succinyllysine; alternate modification is found at K185. H200 (proton acceptor) is an active-site residue. Position 203 is an N6-succinyllysine (K203). An N6-acetyllysine; alternate mark is found at K215 and K239. Residues K215 and K239 each carry the N6-succinyllysine; alternate modification. K239 carries the post-translational modification N6-malonyllysine; alternate. S246 bears the Phosphoserine mark. Position 251 (M251) interacts with NAD(+). At K269 the chain carries N6-succinyllysine. An N6-acetyllysine; alternate mark is found at K296, K301, K307, K314, and K324. An N6-succinyllysine; alternate mark is found at K296, K301, K307, K314, and K324. K307 carries the post-translational modification N6-malonyllysine; alternate. S326 carries the phosphoserine modification. An N6-acetyllysine; alternate mark is found at K328, K329, and K335. At K328 the chain carries N6-succinyllysine; alternate. K329 bears the N6-malonyllysine; alternate mark. K335 is modified (N6-succinyllysine; alternate).

The protein belongs to the LDH/MDH superfamily. MDH type 1 family. In terms of assembly, homodimer. In terms of processing, acetylation is enhanced after treatment either with trichostin A (TCA) or with nicotinamide (NAM) with the appearance of tri- and tetraacetylations. Glucose also increases acetylation. As to expression, expressed in flagella of epididymal sperm.

The protein localises to the mitochondrion matrix. The enzyme catalyses (S)-malate + NAD(+) = oxaloacetate + NADH + H(+). Its activity is regulated as follows. Enzyme activity is enhanced by acetylation. In Rattus norvegicus (Rat), this protein is Malate dehydrogenase, mitochondrial (Mdh2).